Here is a 420-residue protein sequence, read N- to C-terminus: Serine hydroxymethyltransferase (420 aa).

(6S)-5,6,7,8-tetrahydrofolate-binding positions include L121 and 125–127; that span reads GHL. K229 carries the N6-(pyridoxal phosphate)lysine modification.

This sequence belongs to the SHMT family. As to quaternary structure, homodimer. The cofactor is pyridoxal 5'-phosphate.

The protein localises to the cytoplasm. The enzyme catalyses (6R)-5,10-methylene-5,6,7,8-tetrahydrofolate + glycine + H2O = (6S)-5,6,7,8-tetrahydrofolate + L-serine. It participates in one-carbon metabolism; tetrahydrofolate interconversion. It functions in the pathway amino-acid biosynthesis; glycine biosynthesis; glycine from L-serine: step 1/1. Functionally, catalyzes the reversible interconversion of serine and glycine with tetrahydrofolate (THF) serving as the one-carbon carrier. This reaction serves as the major source of one-carbon groups required for the biosynthesis of purines, thymidylate, methionine, and other important biomolecules. Also exhibits THF-independent aldolase activity toward beta-hydroxyamino acids, producing glycine and aldehydes, via a retro-aldol mechanism. The chain is Serine hydroxymethyltransferase from Pasteurella multocida (strain Pm70).